Consider the following 735-residue polypeptide: Peroxisomal multifunctional enzyme type 2 (735 aa).

The segment at 1–305 is (3R)-hydroxyacyl-CoA dehydrogenase; the sequence is MASPLRFDGR…IEVLHKIDSE (305 aa). Residues 16 to 40, leucine 21, and aspartate 40 each bind NAD(+); that span reads GAGG…VVND. Lysine 46 is modified (N6-acetyllysine; alternate). Lysine 46 bears the N6-succinyllysine; alternate mark. Serine 52 is modified (phosphoserine). Lysine 57 and lysine 68 each carry N6-succinyllysine. 75 to 76 lines the NAD(+) pocket; it reads SV. An N6-succinyllysine modification is found at lysine 84. Asparagine 99 is an NAD(+) binding site. Serine 151 lines the substrate pocket. Tyrosine 164 acts as the Proton acceptor in catalysis. NAD(+) contacts are provided by residues 164–168 and 196–199; these read YSAAK and AGSR. Threonine 265 is subject to Phosphothreonine. N6-succinyllysine is present on lysine 275. Phosphoserine occurs at positions 304 and 308. The enoyl-CoA hydratase 2 stretch occupies residues 321–621; sequence SGFAGVVGHK…AQTPSEGGAL (301 aa). Position 355 is an N6-succinyllysine (lysine 355). Residue 405-406 participates in (3R)-3-hydroxydecanoyl-CoA binding; that stretch reads HG. At lysine 423 the chain carries N6-succinyllysine. Residues lysine 434, 509–514, glycine 532, and phenylalanine 562 contribute to the (3R)-3-hydroxydecanoyl-CoA site; that span reads DSNPLH. Residues 483-599 enclose the MaoC-like domain; the sequence is VPSRPPDAVL…QETGDIVISN (117 aa). Lysine 564 carries the post-translational modification N6-acetyllysine. An N6-succinyllysine mark is found at lysine 578 and lysine 662. Residues 623–735 form the SCP2 domain; that stretch reads SALVFGEIGR…QMILKDYAKL (113 aa). Lysine 668 is modified (N6-acetyllysine). Residues glutamine 705 and glutamine 723 each coordinate substrate. Lysine 724 carries the N6-succinyllysine modification. A Microbody targeting signal motif is present at residues 733 to 735; that stretch reads AKL.

It belongs to the short-chain dehydrogenases/reductases (SDR) family. In terms of assembly, homodimer.

Its subcellular location is the peroxisome. The enzyme catalyses a (3R)-3-hydroxyacyl-CoA + NAD(+) = a 3-oxoacyl-CoA + NADH + H(+). The catalysed reaction is (24R,25R)-3alpha,7alpha,12alpha,24-tetrahydroxy-5beta-cholestan-26-oyl-CoA = (24E)-3alpha,7alpha,12alpha-trihydroxy-5beta-cholest-24-en-26-oyl-CoA + H2O. It carries out the reaction a (3R)-3-hydroxyacyl-CoA = a (2E)-enoyl-CoA + H2O. It catalyses the reaction (2E)-octenoyl-CoA + H2O = (3R)-hydroxyoctanoyl-CoA. The enzyme catalyses (3R)-hydroxyoctanoyl-CoA + NAD(+) = 3-oxooctanoyl-CoA + NADH + H(+). The catalysed reaction is (3R)-hydroxyhexadecanoyl-CoA + NAD(+) = 3-oxohexadecanoyl-CoA + NADH + H(+). It carries out the reaction (2E)-hexadecenedioyl-CoA + H2O = (3R)-hydroxyhexadecanedioyl-CoA. It catalyses the reaction (3R)-hydroxyhexadecanedioyl-CoA + NAD(+) = 3-oxohexadecanedioyl-CoA + NADH + H(+). The enzyme catalyses (3R)-hydroxyhexadecanoyl-CoA = (2E)-hexadecenoyl-CoA + H2O. The catalysed reaction is (3R)-3-hydroxydecanoyl-CoA = (2E)-decenoyl-CoA + H2O. It carries out the reaction (3R)-3-hydroxydecanoyl-CoA + NAD(+) = 3-oxodecanoyl-CoA + NADH + H(+). It catalyses the reaction (24R,25R)-3alpha,7alpha,12alpha,24-tetrahydroxy-5beta-cholestan-26-oyl-CoA + NAD(+) = 3alpha,7alpha,12alpha-trihydroxy-24-oxo-5beta-cholestan-26-oyl-CoA + NADH + H(+). The protein operates within lipid metabolism; fatty acid beta-oxidation. Functionally, bifunctional enzyme acting on the peroxisomal fatty acid beta-oxidation pathway. Catalyzes two of the four reactions in fatty acid degradation: hydration of 2-enoyl-CoA (trans-2-enoyl-CoA) to produce (3R)-3-hydroxyacyl-CoA, and dehydrogenation of (3R)-3-hydroxyacyl-CoA to produce 3-ketoacyl-CoA (3-oxoacyl-CoA), which is further metabolized by SCPx. Can use straight-chain and branched-chain fatty acids, as well as bile acid intermediates as substrates. The polypeptide is Peroxisomal multifunctional enzyme type 2 (Rattus norvegicus (Rat)).